Reading from the N-terminus, the 398-residue chain is Succinate--CoA ligase [ADP-forming] subunit beta (398 aa).

The ATP-grasp domain maps to 9–253 (KQVLAKYGVA…ESEEDPAELE (245 aa)). Residues lysine 46, 53–55 (GRG), glutamate 108, cysteine 111, and glutamate 116 contribute to the ATP site. Positions 208 and 222 each coordinate Mg(2+). Residues asparagine 273 and 330 to 332 (GIM) each bind substrate.

This sequence belongs to the succinate/malate CoA ligase beta subunit family. As to quaternary structure, heterotetramer of two alpha and two beta subunits. Requires Mg(2+) as cofactor.

It catalyses the reaction succinate + ATP + CoA = succinyl-CoA + ADP + phosphate. The catalysed reaction is GTP + succinate + CoA = succinyl-CoA + GDP + phosphate. It participates in carbohydrate metabolism; tricarboxylic acid cycle; succinate from succinyl-CoA (ligase route): step 1/1. Functionally, succinyl-CoA synthetase functions in the citric acid cycle (TCA), coupling the hydrolysis of succinyl-CoA to the synthesis of either ATP or GTP and thus represents the only step of substrate-level phosphorylation in the TCA. The beta subunit provides nucleotide specificity of the enzyme and binds the substrate succinate, while the binding sites for coenzyme A and phosphate are found in the alpha subunit. The sequence is that of Succinate--CoA ligase [ADP-forming] subunit beta from Paramagnetospirillum magneticum (strain ATCC 700264 / AMB-1) (Magnetospirillum magneticum).